Here is a 108-residue protein sequence, read N- to C-terminus: Cytochrome c6 (108 aa).

The first 23 residues, 1–23 (MRLLFAFFIICHIFTNNVQLTFA), serve as a signal peptide directing secretion. The heme c site is built by Cys37, Cys40, His41, and Met81.

It belongs to the cytochrome c family. PetJ subfamily. In terms of assembly, monomer. Binds 1 heme c group covalently per subunit.

The protein localises to the plastid. The protein resides in the chloroplast thylakoid lumen. Functions as an electron carrier between membrane-bound cytochrome b6-f and photosystem I in oxygenic photosynthesis. The protein is Cytochrome c6 of Gracilaria tenuistipitata var. liui (Red alga).